The chain runs to 143 residues: uncharacterized protein (143 aa).

The region spanning 24–78 (IRQRREWQNMSQTTLGEAIGVTFQQVQKYEKGVNRVGAGRLQQISKALKVEPSYF) is the HTH cro/C1-type domain. Residues 35 to 54 (QTTLGEAIGVTFQQVQKYEK) constitute a DNA-binding region (H-T-H motif).

This is an uncharacterized protein from Sinorhizobium fredii (strain NBRC 101917 / NGR234).